Consider the following 506-residue polypeptide: Lysine--tRNA ligase (506 aa).

Mg(2+) contacts are provided by E416 and E423.

It belongs to the class-II aminoacyl-tRNA synthetase family. As to quaternary structure, homodimer. Requires Mg(2+) as cofactor.

It localises to the cytoplasm. The catalysed reaction is tRNA(Lys) + L-lysine + ATP = L-lysyl-tRNA(Lys) + AMP + diphosphate. This is Lysine--tRNA ligase from Xylella fastidiosa (strain M12).